The sequence spans 849 residues: Alanine--tRNA ligase (849 aa).

Zn(2+) is bound by residues histidine 551, histidine 555, cysteine 653, and histidine 657.

Belongs to the class-II aminoacyl-tRNA synthetase family. The cofactor is Zn(2+).

Its subcellular location is the cytoplasm. The enzyme catalyses tRNA(Ala) + L-alanine + ATP = L-alanyl-tRNA(Ala) + AMP + diphosphate. Its function is as follows. Catalyzes the attachment of alanine to tRNA(Ala) in a two-step reaction: alanine is first activated by ATP to form Ala-AMP and then transferred to the acceptor end of tRNA(Ala). Also edits incorrectly charged Ser-tRNA(Ala) and Gly-tRNA(Ala) via its editing domain. This Sulfurimonas denitrificans (strain ATCC 33889 / DSM 1251) (Thiomicrospira denitrificans (strain ATCC 33889 / DSM 1251)) protein is Alanine--tRNA ligase.